We begin with the raw amino-acid sequence, 414 residues long: Isocitrate dehydrogenase [NADP] cytoplasmic (414 aa).

Ser-2 is subject to N-acetylserine. The residue at position 42 (Tyr-42) is a Phosphotyrosine. 75–77 (TIT) contacts NADP(+). Thr-77 serves as a coordination point for substrate. Lys-81 bears the N6-acetyllysine mark. Arg-82 provides a ligand contact to NADP(+). Residues 94–100 (SPNGTIR) and Arg-109 contribute to the substrate site. Lys-126 bears the N6-succinyllysine mark. The substrate site is built by Arg-132 and Lys-212. Residues Lys-224, Lys-233, and Lys-243 each carry the N6-acetyllysine modification. Position 252 (Asp-252) interacts with Mn(2+). Lys-260 provides a ligand contact to NADP(+). Mn(2+)-binding residues include Asp-275 and Asp-279. Residue 310–315 (GTVTRH) coordinates NADP(+). Lys-321 bears the N6-acetyllysine mark. Residue Asn-328 coordinates NADP(+). Residue Ser-389 is modified to Phosphoserine. Lys-400 is modified (N6-succinyllysine).

It belongs to the isocitrate and isopropylmalate dehydrogenases family. Homodimer. The cofactor is Mg(2+). It depends on Mn(2+) as a cofactor. Acetylation at Lys-374 dramatically reduces catalytic activity.

The protein localises to the cytoplasm. It is found in the cytosol. The enzyme catalyses D-threo-isocitrate + NADP(+) = 2-oxoglutarate + CO2 + NADPH. Functionally, catalyzes the NADP(+)-dependent oxidative decarboxylation of isocitrate (D-threo-isocitrate) to 2-ketoglutarate (2-oxoglutarate), which is required by other enzymes such as the phytanoyl-CoA dioxygenase. Plays a critical role in the generation of NADPH, an important cofactor in many biosynthesis pathways. May act as a corneal epithelial crystallin and may be involved in maintaining corneal epithelial transparency. The chain is Isocitrate dehydrogenase [NADP] cytoplasmic (IDH1) from Microtus mexicanus (Mexican vole).